The sequence spans 330 residues: 6-phosphogluconolactonase (330 aa).

Belongs to the cycloisomerase 2 family.

It catalyses the reaction 6-phospho-D-glucono-1,5-lactone + H2O = 6-phospho-D-gluconate + H(+). Its pathway is carbohydrate degradation; pentose phosphate pathway; D-ribulose 5-phosphate from D-glucose 6-phosphate (oxidative stage): step 2/3. Its function is as follows. Catalyzes the hydrolysis of 6-phosphogluconolactone to 6-phosphogluconate. This is 6-phosphogluconolactonase from Erwinia tasmaniensis (strain DSM 17950 / CFBP 7177 / CIP 109463 / NCPPB 4357 / Et1/99).